We begin with the raw amino-acid sequence, 440 residues long: Ribosomal protein uS12 methylthiotransferase RimO (440 aa).

One can recognise an MTTase N-terminal domain in the interval 8-118; that stretch reads PTVGFVSLGC…VMGIVHTHLP (111 aa). Positions 17, 53, 82, 149, 153, and 156 each coordinate [4Fe-4S] cluster. One can recognise a Radical SAM core domain in the interval 135 to 372; sequence LTPDHFAYLK…MQVQEDISAD (238 aa). In terms of domain architecture, TRAM spans 375–440; the sequence is AAKIDTVIQV…DHHDLYAQVV (66 aa).

It belongs to the methylthiotransferase family. RimO subfamily. It depends on [4Fe-4S] cluster as a cofactor.

Its subcellular location is the cytoplasm. It catalyses the reaction L-aspartate(89)-[ribosomal protein uS12]-hydrogen + (sulfur carrier)-SH + AH2 + 2 S-adenosyl-L-methionine = 3-methylsulfanyl-L-aspartate(89)-[ribosomal protein uS12]-hydrogen + (sulfur carrier)-H + 5'-deoxyadenosine + L-methionine + A + S-adenosyl-L-homocysteine + 2 H(+). Functionally, catalyzes the methylthiolation of an aspartic acid residue of ribosomal protein uS12. This is Ribosomal protein uS12 methylthiotransferase RimO from Dechloromonas aromatica (strain RCB).